The chain runs to 280 residues: Large ribosomal subunit protein uL2 (280 aa).

Disordered stretches follow at residues 33-55 (LTEG…RRRG) and 199-266 (DNSN…KASQ). The span at 209-219 (GRMRHKGKRPS) shows a compositional bias: basic residues.

Belongs to the universal ribosomal protein uL2 family. As to quaternary structure, part of the 50S ribosomal subunit. Forms a bridge to the 30S subunit in the 70S ribosome.

Its function is as follows. One of the primary rRNA binding proteins. Required for association of the 30S and 50S subunits to form the 70S ribosome, for tRNA binding and peptide bond formation. It has been suggested to have peptidyltransferase activity; this is somewhat controversial. Makes several contacts with the 16S rRNA in the 70S ribosome. This Ruegeria sp. (strain TM1040) (Silicibacter sp.) protein is Large ribosomal subunit protein uL2.